A 246-amino-acid chain; its full sequence is tRNA pseudouridine synthase A (246 aa).

Asp-52 serves as the catalytic Nucleophile. Tyr-111 is a binding site for substrate.

It belongs to the tRNA pseudouridine synthase TruA family. As to quaternary structure, homodimer.

The catalysed reaction is uridine(38/39/40) in tRNA = pseudouridine(38/39/40) in tRNA. Functionally, formation of pseudouridine at positions 38, 39 and 40 in the anticodon stem and loop of transfer RNAs. The sequence is that of tRNA pseudouridine synthase A from Borrelia garinii subsp. bavariensis (strain ATCC BAA-2496 / DSM 23469 / PBi) (Borreliella bavariensis).